A 99-amino-acid chain; its full sequence is UPF0122 protein UUR10_0158 (99 aa).

This sequence belongs to the UPF0122 family.

Its function is as follows. Might take part in the signal recognition particle (SRP) pathway. This is inferred from the conservation of its genetic proximity to ftsY/ffh. May be a regulatory protein. The polypeptide is UPF0122 protein UUR10_0158 (Ureaplasma urealyticum serovar 10 (strain ATCC 33699 / Western)).